Reading from the N-terminus, the 768-residue chain is DNA ligase (768 aa).

Residues 61–65, 110–111, and Glu146 contribute to the NAD(+) site; these read DAEFD and SL. The active-site N6-AMP-lysine intermediate is the Lys148. NAD(+) contacts are provided by Arg169, Glu206, Lys322, and Lys346. Residues Cys443, Cys446, Cys462, and Cys468 each contribute to the Zn(2+) site. Positions 661-750 constitute a BRCT domain; it reads SVPRTLEGLT…PAQTGTEAEA (90 aa). The segment at 739–768 is disordered; sequence NGPAQTGTEAEAATDEATVVDETAAEAATE. Residues 746 to 768 are compositionally biased toward low complexity; sequence TEAEAATDEATVVDETAAEAATE.

The protein belongs to the NAD-dependent DNA ligase family. LigA subfamily. Mg(2+) serves as cofactor. Mn(2+) is required as a cofactor.

It carries out the reaction NAD(+) + (deoxyribonucleotide)n-3'-hydroxyl + 5'-phospho-(deoxyribonucleotide)m = (deoxyribonucleotide)n+m + AMP + beta-nicotinamide D-nucleotide.. In terms of biological role, DNA ligase that catalyzes the formation of phosphodiester linkages between 5'-phosphoryl and 3'-hydroxyl groups in double-stranded DNA using NAD as a coenzyme and as the energy source for the reaction. It is essential for DNA replication and repair of damaged DNA. In Paenarthrobacter aurescens (strain TC1), this protein is DNA ligase.